Consider the following 363-residue polypeptide: UDP-N-acetylenolpyruvoylglucosamine reductase (363 aa).

An FAD-binding PCMH-type domain is found at 25 to 201; the sequence is IGPVARRMLT…RSAPVRYREL (177 aa). Arg-168 is an active-site residue. Residue Ser-249 is the Proton donor of the active site. Residue Glu-352 is part of the active site.

This sequence belongs to the MurB family. FAD is required as a cofactor.

The protein localises to the cytoplasm. The enzyme catalyses UDP-N-acetyl-alpha-D-muramate + NADP(+) = UDP-N-acetyl-3-O-(1-carboxyvinyl)-alpha-D-glucosamine + NADPH + H(+). It functions in the pathway cell wall biogenesis; peptidoglycan biosynthesis. Functionally, cell wall formation. This is UDP-N-acetylenolpyruvoylglucosamine reductase from Mycolicibacterium smegmatis (strain ATCC 700084 / mc(2)155) (Mycobacterium smegmatis).